Consider the following 318-residue polypeptide: Ribonuclease Z (318 aa).

Zn(2+)-binding residues include H62, H64, D66, H67, H144, D215, and H273. D66 functions as the Proton acceptor in the catalytic mechanism.

The protein belongs to the RNase Z family. In terms of assembly, homodimer. It depends on Zn(2+) as a cofactor.

It carries out the reaction Endonucleolytic cleavage of RNA, removing extra 3' nucleotides from tRNA precursor, generating 3' termini of tRNAs. A 3'-hydroxy group is left at the tRNA terminus and a 5'-phosphoryl group is left at the trailer molecule.. Zinc phosphodiesterase, which displays some tRNA 3'-processing endonuclease activity. Probably involved in tRNA maturation, by removing a 3'-trailer from precursor tRNA. The sequence is that of Ribonuclease Z from Prochlorococcus marinus (strain MIT 9313).